We begin with the raw amino-acid sequence, 98 residues long: NADH-ubiquinone oxidoreductase chain 4L (98 aa).

Helical transmembrane passes span 1–21, 29–49, and 61–81; these read MSLVYMNIMTAFAVSLTGLLM, SLLCLEGMMLSLFIMATLMIL, and IILLVFAACEAALGLSLLVMV.

This sequence belongs to the complex I subunit 4L family. As to quaternary structure, core subunit of respiratory chain NADH dehydrogenase (Complex I) which is composed of 45 different subunits.

Its subcellular location is the mitochondrion inner membrane. The enzyme catalyses a ubiquinone + NADH + 5 H(+)(in) = a ubiquinol + NAD(+) + 4 H(+)(out). Its function is as follows. Core subunit of the mitochondrial membrane respiratory chain NADH dehydrogenase (Complex I) which catalyzes electron transfer from NADH through the respiratory chain, using ubiquinone as an electron acceptor. Part of the enzyme membrane arm which is embedded in the lipid bilayer and involved in proton translocation. This chain is NADH-ubiquinone oxidoreductase chain 4L (MT-ND4L), found in Capra hircus (Goat).